A 143-amino-acid chain; its full sequence is Phosphoprotein 32 (143 aa).

A compositionally biased stretch (polar residues) spans 1-14; the sequence is MESSNINALQQPSS. A disordered region spans residues 1-32; that stretch reads MESSNINALQQPSSIAHHPSKQCASSLNETVK.

This sequence belongs to the varicellovirus ORF32 protein family. Post-translationally, phosphorylated by ORF47 protein.

This Homo sapiens (Human) protein is Phosphoprotein 32.